A 423-amino-acid chain; its full sequence is Glycine amidinotransferase, mitochondrial (423 aa).

The transit peptide at 1-43 (MLRVRCLRGGSRGAEAVHYIGSRLGGSLTGWVQRTFQSTQAAT) directs the protein to the mitochondrion. Ser46 and Ser49 each carry phosphoserine. Asp170 lines the arginine pocket. Residues Asp254 and His303 contribute to the active site. Asp305, Arg322, Ser354, and Ser355 together coordinate arginine. N6-acetyllysine is present on Lys385. Cys407 serves as the catalytic Amidino-cysteine intermediate.

The protein belongs to the amidinotransferase family. As to quaternary structure, homodimer. Highly expressed in the kidney and pancreas, especially in the proximal tubules of the kidney, and alpha cells of the pancreatic islets (at protein level). Moderately expressed in liver hepatocytes (at protein level). Expressed in the kidney, pancreas, liver, colon, ileum, jejunum, heart and skeletal muscle. In reproductive tissues, expressed in the testis, epididymis, ovary, oviduct and uterus. Expressed throughout the brain in neurons, astrocytes and oligodendrocytes. In 12.5 dpc embryos, it is expressed in the middle part of the somites, hepatic primordium and wall of the dorsal aorta. Expressed in 15.5 dpc embryos in isolated cells throughout the central nervous system, skeletal muscles, gonad primordia, caudal somites, liver and pancreas, but not in the choroid plexus, root ganglia or kidney. Expressed in skeletal muscle, kidney, pancreas, central nervous system, liver and intestine epithelial cells, but not in epidermis, dermis, olfactory epithelium, trachea, lung, stomach or heart in 18.5 dpc embryos.

It localises to the mitochondrion inner membrane. It carries out the reaction L-arginine + glycine = guanidinoacetate + L-ornithine. It catalyses the reaction 4-aminobutanoate + L-arginine = 4-guanidinobutanoate + L-ornithine. The catalysed reaction is beta-alanine + L-arginine = 3-guanidinopropanoate + L-ornithine. The enzyme catalyses taurine + L-arginine = taurocyamine + L-ornithine. It functions in the pathway amine and polyamine biosynthesis; creatine biosynthesis; creatine from L-arginine and glycine: step 1/2. In terms of biological role, transamidinase that catalyzes the transfer of the amidino group of L-arginine onto the amino moiety of acceptor metabolites such as glycine, beta-alanine, gamma-aminobutyric acid (GABA) and taurine yielding the corresponding guanidine derivatives. Catalyzes the rate-limiting step of creatine biosynthesis, namely the transfer of the amidino group from L-arginine to glycine to generate guanidinoacetate, which is then methylated by GAMT to form creatine. Provides creatine as a source for ATP generation in tissues with high energy demands, in particular skeletal muscle, heart and brain. In Rattus norvegicus (Rat), this protein is Glycine amidinotransferase, mitochondrial (Gatm).